A 92-amino-acid polypeptide reads, in one-letter code: N(2)-fixation sustaining protein CowN (92 aa).

This sequence belongs to the CowN family.

Is required to sustain N(2)-dependent growth in the presence of low levels of carbon monoxide (CO). Probably acts by protecting the N(2) fixation ability of the nitrogenase complex, which is inactivated in the presence of CO. This Rhodopseudomonas palustris (strain ATCC BAA-98 / CGA009) protein is N(2)-fixation sustaining protein CowN.